The following is a 48-amino-acid chain: Palustrin-3b (48 aa).

An intrachain disulfide couples C43 to C48.

In terms of tissue distribution, expressed by the skin glands.

Its subcellular location is the secreted. Its function is as follows. Antimicrobial activity against Gram-negative bacterium E.coli. The chain is Palustrin-3b from Lithobates palustris (Pickerel frog).